Here is a 387-residue protein sequence, read N- to C-terminus: Arginine biosynthesis bifunctional protein ArgJ 2 (387 aa).

6 residues coordinate substrate: threonine 147, lysine 169, threonine 180, glutamate 259, asparagine 382, and threonine 387. Threonine 180 acts as the Nucleophile in catalysis.

This sequence belongs to the ArgJ family. Heterotetramer of two alpha and two beta chains.

Its subcellular location is the cytoplasm. The catalysed reaction is N(2)-acetyl-L-ornithine + L-glutamate = N-acetyl-L-glutamate + L-ornithine. It carries out the reaction L-glutamate + acetyl-CoA = N-acetyl-L-glutamate + CoA + H(+). It functions in the pathway amino-acid biosynthesis; L-arginine biosynthesis; L-ornithine and N-acetyl-L-glutamate from L-glutamate and N(2)-acetyl-L-ornithine (cyclic): step 1/1. It participates in amino-acid biosynthesis; L-arginine biosynthesis; N(2)-acetyl-L-ornithine from L-glutamate: step 1/4. Functionally, catalyzes two activities which are involved in the cyclic version of arginine biosynthesis: the synthesis of N-acetylglutamate from glutamate and acetyl-CoA as the acetyl donor, and of ornithine by transacetylation between N(2)-acetylornithine and glutamate. This chain is Arginine biosynthesis bifunctional protein ArgJ 2, found in Nostoc sp. (strain PCC 7120 / SAG 25.82 / UTEX 2576).